A 197-amino-acid chain; its full sequence is Probable molybdenum cofactor guanylyltransferase (197 aa).

GTP-binding positions include 9-11 (LAG), lysine 21, aspartate 65, and aspartate 94. Mg(2+) is bound at residue aspartate 94.

The protein belongs to the MobA family. Mg(2+) is required as a cofactor.

It localises to the cytoplasm. The catalysed reaction is Mo-molybdopterin + GTP + H(+) = Mo-molybdopterin guanine dinucleotide + diphosphate. Functionally, transfers a GMP moiety from GTP to Mo-molybdopterin (Mo-MPT) cofactor (Moco or molybdenum cofactor) to form Mo-molybdopterin guanine dinucleotide (Mo-MGD) cofactor. In Carboxydothermus hydrogenoformans (strain ATCC BAA-161 / DSM 6008 / Z-2901), this protein is Probable molybdenum cofactor guanylyltransferase.